The chain runs to 874 residues: Coatomer subunit gamma-1 (874 aa).

The span at 1-11 (MLKKFDKKDEE) shows a compositional bias: basic and acidic residues. The disordered stretch occupies residues 1 to 21 (MLKKFDKKDEESGGGSNPLQH). HEAT repeat units follow at residues 64–101 (TEAT…IAED), 283–320 (KELA…KHPS), 322–355 (VTAC…GSES), and 356–392 (SIDR…KYPR). Thr-594 carries the phosphothreonine modification. The tract at residues 609–874 (RQEIFQEQLA…PVDIILASVG (266 aa)) is interaction with ZNF289/ARFGAP2.

This sequence belongs to the COPG family. Oligomeric complex that consists of at least the alpha, beta, beta', gamma, delta, epsilon and zeta subunits. Interacts with ZNF289/ARFGAP2 through its C-terminal appendage domain. Interacts with EGFR upon EGF treatment; interaction is essential for regulation of EGF-dependent nuclear transport of EGFR by retrograde trafficking from the Golgi to the ER. The coatomer interacts with KDEL receptors; the interaction is important for retrograde trafficking of KDEL-bearing proteins from the Golgi to the endoplasmic reticulum. Interacts with COPB1. Interacts with TMED10 (via C-terminus). Interacts with TMED2, TMED3, TMED7 and TMED9.

Its subcellular location is the cytoplasm. It is found in the cytosol. It localises to the golgi apparatus membrane. The protein localises to the cytoplasmic vesicle. The protein resides in the COPI-coated vesicle membrane. Its function is as follows. The coatomer is a cytosolic protein complex that binds to dilysine motifs and reversibly associates with Golgi non-clathrin-coated vesicles, which further mediate biosynthetic protein transport from the ER, via the Golgi up to the trans Golgi network. Coatomer complex is required for budding from Golgi membranes, and is essential for the retrograde Golgi-to-ER transport of dilysine-tagged proteins. In mammals, the coatomer can only be recruited by membranes associated to ADP-ribosylation factors (ARFs), which are small GTP-binding proteins; the complex also influences the Golgi structural integrity, as well as the processing, activity, and endocytic recycling of LDL receptors. Required for limiting lipid storage in lipid droplets. Involved in lipid homeostasis by regulating the presence of perilipin family members PLIN2 and PLIN3 at the lipid droplet surface and promoting the association of adipocyte triglyceride lipase (PNPLA2) with the lipid droplet surface to mediate lipolysis. The sequence is that of Coatomer subunit gamma-1 (Copg1) from Mus musculus (Mouse).